A 533-amino-acid polypeptide reads, in one-letter code: D-3-phosphoglycerate dehydrogenase (533 aa).

At Ala2 the chain carries N-acetylalanine. The residue at position 14 (Ser14) is a Phosphoserine. At Lys21 the chain carries N6-acetyllysine; alternate. Lys21 participates in a covalent cross-link: Glycyl lysine isopeptide (Lys-Gly) (interchain with G-Cter in SUMO1); alternate. A Glycyl lysine isopeptide (Lys-Gly) (interchain with G-Cter in SUMO2); alternate cross-link involves residue Lys21. Lys58 carries the N6-acetyllysine modification. Residues Thr78, 155–156, Asp175, Thr207, 234–236, and Asp260 each bind NAD(+); these read RI and CAR. Thr78 bears the Phosphothreonine mark. Arg236 is an active-site residue. The active site involves Glu265. His283 functions as the Proton donor in the catalytic mechanism. 283-286 contacts NAD(+); it reads HLGA.

The protein belongs to the D-isomer specific 2-hydroxyacid dehydrogenase family. Homotetramer.

The catalysed reaction is (2R)-3-phosphoglycerate + NAD(+) = 3-phosphooxypyruvate + NADH + H(+). It carries out the reaction (R)-2-hydroxyglutarate + NAD(+) = 2-oxoglutarate + NADH + H(+). The enzyme catalyses (S)-malate + NAD(+) = oxaloacetate + NADH + H(+). The protein operates within amino-acid biosynthesis; L-serine biosynthesis; L-serine from 3-phospho-D-glycerate: step 1/3. Catalyzes the reversible oxidation of 3-phospho-D-glycerate to 3-phosphonooxypyruvate, the first step of the phosphorylated L-serine biosynthesis pathway. Also catalyzes the reversible oxidation of 2-hydroxyglutarate to 2-oxoglutarate and the reversible oxidation of (S)-malate to oxaloacetate. This is D-3-phosphoglycerate dehydrogenase (PHGDH) from Pan troglodytes (Chimpanzee).